We begin with the raw amino-acid sequence, 370 residues long: Cytochrome b (370 aa).

Transmembrane regions (helical) follow at residues 25-45 (FGSMLLACSTLQVLTGFFLAV), 69-90 (WLMQNLHAIGASMFFICIYIHI), 105-125 (WLSGTTLLIMLMATAFFGYVL), and 170-190 (FFALHFILPFGIISLSSLHIL). Positions 75 and 89 each coordinate heme b. Heme b contacts are provided by His174 and His188. His193 contributes to the a ubiquinone binding site. Transmembrane regions (helical) follow at residues 218–238 (YKDLLMLAMLTTLLLMIVSFF), 280–300 (LGGALALTMSIMILLTVPFTH), 312–332 (LMQLMFWTFAATFLVISWSST), and 339–358 (FTTISQAAALMYFLFFISKP).

This sequence belongs to the cytochrome b family. In terms of assembly, the cytochrome bc1 complex contains 3 respiratory subunits (MT-CYB, CYC1 and UQCRFS1), 2 core proteins (UQCRC1 and UQCRC2) and probably 6 low-molecular weight proteins. The cofactor is heme b.

It localises to the mitochondrion inner membrane. Functionally, component of the ubiquinol-cytochrome c reductase complex (complex III or cytochrome b-c1 complex) that is part of the mitochondrial respiratory chain. The b-c1 complex mediates electron transfer from ubiquinol to cytochrome c. Contributes to the generation of a proton gradient across the mitochondrial membrane that is then used for ATP synthesis. This chain is Cytochrome b (MT-CYB), found in Chilabothrus subflavus (Jamaican yellow boa).